We begin with the raw amino-acid sequence, 210 residues long: Isomeliandiol synthase ISM1 (210 aa).

The next 5 helical transmembrane spans lie at 17–37 (FTLH…TWFI), 50–70 (LLCW…YFVF), 107–127 (IEGM…YAIV), 135–155 (ILQF…FLTA), and 172–192 (YYVG…INFW). In terms of domain architecture, EXPERA spans 46–188 (GDRLLLCWWA…IWIIVPSLIA (143 aa)).

Belongs to the EBP family.

The protein resides in the membrane. It carries out the reaction 7,8-epoxymelianol = isomeliandiol. It functions in the pathway secondary metabolite biosynthesis; terpenoid biosynthesis. Isomerase involved in the biosynthesis of limonoids and quassinoids triterpene natural products such as ailanthone, chaparrinone, glaucarubinone and amarolide, allelopathic degraded triterpene lactones inhibiting the growth of other plants, and possessing antimalarial, antifeedant, insecticidal, anti-inflammatory and anticancer activities. Catalyzes the conversion of 7,8-epoxymelianol to isomeliandiol via skeletal rearrangements. This Ailanthus altissima (Tree-of-heaven) protein is Isomeliandiol synthase ISM1.